The primary structure comprises 159 residues: 2-C-methyl-D-erythritol 2,4-cyclodiphosphate synthase (159 aa).

A divalent metal cation is bound by residues Asp10 and His12. 4-CDP-2-C-methyl-D-erythritol 2-phosphate-binding positions include 10–12 (DVH) and 36–37 (HS). An a divalent metal cation-binding site is contributed by His44. Residues 58–60 (DIG), 63–67 (FANTD), 134–137 (TTNE), and Arg144 each bind 4-CDP-2-C-methyl-D-erythritol 2-phosphate.

Belongs to the IspF family. As to quaternary structure, homotrimer. A divalent metal cation is required as a cofactor.

It carries out the reaction 4-CDP-2-C-methyl-D-erythritol 2-phosphate = 2-C-methyl-D-erythritol 2,4-cyclic diphosphate + CMP. Its pathway is isoprenoid biosynthesis; isopentenyl diphosphate biosynthesis via DXP pathway; isopentenyl diphosphate from 1-deoxy-D-xylulose 5-phosphate: step 4/6. Involved in the biosynthesis of isopentenyl diphosphate (IPP) and dimethylallyl diphosphate (DMAPP), two major building blocks of isoprenoid compounds. Catalyzes the conversion of 4-diphosphocytidyl-2-C-methyl-D-erythritol 2-phosphate (CDP-ME2P) to 2-C-methyl-D-erythritol 2,4-cyclodiphosphate (ME-CPP) with a corresponding release of cytidine 5-monophosphate (CMP). In Cytophaga hutchinsonii (strain ATCC 33406 / DSM 1761 / CIP 103989 / NBRC 15051 / NCIMB 9469 / D465), this protein is 2-C-methyl-D-erythritol 2,4-cyclodiphosphate synthase.